The following is a 510-amino-acid chain: Proline--tRNA ligase 2 (510 aa).

It belongs to the class-II aminoacyl-tRNA synthetase family. ProS type 3 subfamily. Homodimer.

The protein resides in the cytoplasm. It catalyses the reaction tRNA(Pro) + L-proline + ATP = L-prolyl-tRNA(Pro) + AMP + diphosphate. Functionally, catalyzes the attachment of proline to tRNA(Pro) in a two-step reaction: proline is first activated by ATP to form Pro-AMP and then transferred to the acceptor end of tRNA(Pro). This Anaeromyxobacter dehalogenans (strain 2CP-C) protein is Proline--tRNA ligase 2.